A 584-amino-acid polypeptide reads, in one-letter code: Putative adenine deaminase BA_3032/GBAA_3032/BAS2818 (584 aa).

The protein belongs to the metallo-dependent hydrolases superfamily. Adenine deaminase family.

It carries out the reaction adenine + H2O + H(+) = hypoxanthine + NH4(+). The polypeptide is Putative adenine deaminase BA_3032/GBAA_3032/BAS2818 (Bacillus anthracis).